Here is a 61-residue protein sequence, read N- to C-terminus: [Thr6]-bradykinyl-Val,Asp (61 aa).

The first 22 residues, 1-22 (MSFLKKSLFLVLFLGLVSFSIC), serve as a signal peptide directing secretion. Residues 23–50 (EEEKRETEEEENEDEMDKESEEKRESPE) constitute a propeptide that is removed on maturation. Residues 24–61 (EEKRETEEEENEDEMDKESEEKRESPERPPGFTPFRVD) form a disordered region. The span at 30 to 41 (EEEENEDEMDKE) shows a compositional bias: acidic residues. A 4-hydroxyproline; in form [Hyp3,Thr6]-bradykinyl-Val,Asp and [Hyp3,Thr6]-bradykinin modification is found at Pro-53.

This sequence belongs to the frog skin active peptide (FSAP) family. Bradykinin-related peptide subfamily. In terms of tissue distribution, expressed by the skin glands.

It localises to the secreted. Its function is as follows. Induces relaxation of rat smooth muscle from tail artery (EC(50)=16.8 nM) and contraction of that from ileum (EC(50)=205 nM), urinary bladder (EC(50)=895 nM) and uterus (EC(50)=60.3 nM). Binds to both bradykinin receptor B1 (BDKRB1) and B2 (BDKRB2). Functionally, [Hyp3,Thr6]-bradykinin: Induces relaxation of rat smooth muscle from tail artery (EC(50)=56.7 nM) and contraction of that from ileum (EC(50)=588 nM), urinary bladder (EC(50)=4.6 uM) and uterus (EC(50)=3.9 nM). Binds to both bradykinin receptor B1 (BDKRB1) and B2 (BDKRB2). In arterial smooth muscle, the effect via BDKRB1 is stronger, in uterus, ileum and urinary bladder that via BDKRB2. In terms of biological role, induces relaxation of rat smooth muscle from tail artery (EC(50)=10.8 nM) and contraction of that from ileum (EC(50)=645 nM), urinary bladder (EC(50)=1.1 uM) and uterus (EC(50)=1.2 uM). Binds to both bradykinin receptor B1 (BDKRB1) and B2 (BDKRB2). Apart from uterus smooth muscle, the effect via B2 is stronger. [Hyp3,Thr6]-bradykinyl-Val,Asp: Induces relaxation of rat smooth muscle from tail artery (EC(50)=3.5 nM) and contraction of that from ileum (EC(50)=223 nM), urinary bladder (EC(50)=1.5 uM) and uterus (EC(50)=356 nM). Binds to both bradykinin receptor B1 (BDKRB1) and B2 (BDKRB2); the effects via B2 a stronger. In Agalychnis callidryas (Red-eyed tree frog), this protein is [Thr6]-bradykinyl-Val,Asp.